We begin with the raw amino-acid sequence, 196 residues long: FMN-dependent NADH:quinone oxidoreductase (196 aa).

Residue Ser-10 coordinates FMN.

Belongs to the azoreductase type 1 family. As to quaternary structure, homodimer. It depends on FMN as a cofactor.

The catalysed reaction is 2 a quinone + NADH + H(+) = 2 a 1,4-benzosemiquinone + NAD(+). It catalyses the reaction N,N-dimethyl-1,4-phenylenediamine + anthranilate + 2 NAD(+) = 2-(4-dimethylaminophenyl)diazenylbenzoate + 2 NADH + 2 H(+). Functionally, quinone reductase that provides resistance to thiol-specific stress caused by electrophilic quinones. Its function is as follows. Also exhibits azoreductase activity. Catalyzes the reductive cleavage of the azo bond in aromatic azo compounds to the corresponding amines. This Cereibacter sphaeroides (strain ATCC 17023 / DSM 158 / JCM 6121 / CCUG 31486 / LMG 2827 / NBRC 12203 / NCIMB 8253 / ATH 2.4.1.) (Rhodobacter sphaeroides) protein is FMN-dependent NADH:quinone oxidoreductase.